Consider the following 533-residue polypeptide: 2-isopropylmalate synthase (533 aa).

A Pyruvate carboxyltransferase domain is found at 8–269; that stretch reads IIIFDTTLRD…YYNPFLGRPA (262 aa). Positions 17, 208, 210, and 244 each coordinate Mn(2+). Residues 408 to 533 are regulatory domain; that stretch reads RLELVQVSCG…VSANPAKASL (126 aa).

It belongs to the alpha-IPM synthase/homocitrate synthase family. LeuA type 1 subfamily. In terms of assembly, homodimer. Mn(2+) serves as cofactor.

Its subcellular location is the cytoplasm. The catalysed reaction is 3-methyl-2-oxobutanoate + acetyl-CoA + H2O = (2S)-2-isopropylmalate + CoA + H(+). Its pathway is amino-acid biosynthesis; L-leucine biosynthesis; L-leucine from 3-methyl-2-oxobutanoate: step 1/4. Catalyzes the condensation of the acetyl group of acetyl-CoA with 3-methyl-2-oxobutanoate (2-ketoisovalerate) to form 3-carboxy-3-hydroxy-4-methylpentanoate (2-isopropylmalate). This chain is 2-isopropylmalate synthase, found in Picosynechococcus sp. (strain ATCC 27264 / PCC 7002 / PR-6) (Agmenellum quadruplicatum).